Reading from the N-terminus, the 430-residue chain is Dihydroorotase (430 aa).

Residues H57 and H59 each coordinate Zn(2+). Residues 59-61 (HLR) and N91 contribute to the substrate site. Zn(2+)-binding residues include D151, H178, and H231. Substrate is bound at residue N277. A Zn(2+)-binding site is contributed by D304. D304 is an active-site residue. Substrate is bound by residues H308 and 322–323 (PG).

The protein belongs to the metallo-dependent hydrolases superfamily. DHOase family. Class I DHOase subfamily. It depends on Zn(2+) as a cofactor.

It carries out the reaction (S)-dihydroorotate + H2O = N-carbamoyl-L-aspartate + H(+). The protein operates within pyrimidine metabolism; UMP biosynthesis via de novo pathway; (S)-dihydroorotate from bicarbonate: step 3/3. Catalyzes the reversible cyclization of carbamoyl aspartate to dihydroorotate. This is Dihydroorotase from Mycobacterium bovis (strain ATCC BAA-935 / AF2122/97).